The following is a 35-amino-acid chain: Mu-theraphotoxin-Pm1a (35 aa).

3 cysteine pairs are disulfide-bonded: C3–C17, C10–C22, and C16–C29. F35 carries the post-translational modification Phenylalanine amide.

Belongs to the neurotoxin 10 (Hwtx-1) family. 62 (Vatx) subfamily. In terms of tissue distribution, expressed by the venom gland.

The protein localises to the secreted. In terms of biological role, gating-modifier toxin with weak activity on Nav1.7/SCN9A and Nav1.8/SCN10A. Inhibits Nav1.7/SCN9A peak current (IC(50)=334 nM) and shifts the voltage dependence of activation to more depolarised membrane potentials. Shows 21% peak current inhibition (at 10 uM) on Nav1.8/SCN10A sodium channels. The sequence is that of Mu-theraphotoxin-Pm1a from Poecilotheria metallica (Metallic blue ornamental tree spider).